Here is a 490-residue protein sequence, read N- to C-terminus: Proline--tRNA ligase (490 aa).

It belongs to the class-II aminoacyl-tRNA synthetase family. ProS type 3 subfamily. In terms of assembly, homodimer.

The protein resides in the cytoplasm. The enzyme catalyses tRNA(Pro) + L-proline + ATP = L-prolyl-tRNA(Pro) + AMP + diphosphate. In terms of biological role, catalyzes the attachment of proline to tRNA(Pro) in a two-step reaction: proline is first activated by ATP to form Pro-AMP and then transferred to the acceptor end of tRNA(Pro). This is Proline--tRNA ligase from Salinibacter ruber (strain DSM 13855 / M31).